The chain runs to 417 residues: Frizzy aggregation protein FrzCD (417 aa).

Residues 1-11 (MSLDTPNEKPA) show a composition bias toward basic and acidic residues. Residues 1-34 (MSLDTPNEKPAGKARARKAPASKAGATNAASTSS) are disordered. Low complexity predominate over residues 21–34 (ASKAGATNAASTSS). Residues 144–380 (AALRLSSSAN…QVVASMAEIE (237 aa)) enclose the Methyl-accepting transducer domain.

It belongs to the methyl-accepting chemotaxis (MCP) protein family. Post-translationally, methylated. Saturated fatty acids capric acid and lauric acid stimulate methylation. Short-chain alcohols, such as isoamyl alcohol, and some other solvents cause demethylation.

It localises to the cytoplasm. Methyl-accepting taxis protein necessary for the proper aggregation of cells to form fruiting bodies. Frz genes define a system of signal transduction analogous to the enterobacterial chemotaxis systems. The chain is Frizzy aggregation protein FrzCD (frzCD) from Myxococcus xanthus.